The sequence spans 378 residues: Probable tRNA sulfurtransferase (378 aa).

The region spanning 51 to 153 (DANLEKLQYV…SDKTYLFSKT (103 aa)) is the THUMP domain. ATP-binding positions include 171–172 (LM), 196–197 (SF), R253, G275, and Q284.

It belongs to the ThiI family.

It is found in the cytoplasm. The enzyme catalyses [ThiI sulfur-carrier protein]-S-sulfanyl-L-cysteine + a uridine in tRNA + 2 reduced [2Fe-2S]-[ferredoxin] + ATP + H(+) = [ThiI sulfur-carrier protein]-L-cysteine + a 4-thiouridine in tRNA + 2 oxidized [2Fe-2S]-[ferredoxin] + AMP + diphosphate. It catalyses the reaction [ThiS sulfur-carrier protein]-C-terminal Gly-Gly-AMP + S-sulfanyl-L-cysteinyl-[cysteine desulfurase] + AH2 = [ThiS sulfur-carrier protein]-C-terminal-Gly-aminoethanethioate + L-cysteinyl-[cysteine desulfurase] + A + AMP + 2 H(+). It functions in the pathway cofactor biosynthesis; thiamine diphosphate biosynthesis. Catalyzes the ATP-dependent transfer of a sulfur to tRNA to produce 4-thiouridine in position 8 of tRNAs, which functions as a near-UV photosensor. Also catalyzes the transfer of sulfur to the sulfur carrier protein ThiS, forming ThiS-thiocarboxylate. This is a step in the synthesis of thiazole, in the thiamine biosynthesis pathway. The sulfur is donated as persulfide by IscS. The polypeptide is Probable tRNA sulfurtransferase (Mycoplasmopsis agalactiae (strain NCTC 10123 / CIP 59.7 / PG2) (Mycoplasma agalactiae)).